A 460-amino-acid chain; its full sequence is Diguanylate cyclase DosC (460 aa).

Position 98 (His98) interacts with heme. The region spanning 325–458 (TPLSVLIIDV…GRNRVELWKA (134 aa)) is the GGDEF domain. Residue Asp333 participates in Mg(2+) binding. Substrate contacts are provided by Asn341 and Asp350. Residue Asp376 participates in Mg(2+) binding. Asp376 acts as the Proton acceptor in catalysis.

Heme is required as a cofactor. Mg(2+) serves as cofactor.

It carries out the reaction 2 GTP = 3',3'-c-di-GMP + 2 diphosphate. Its pathway is purine metabolism; 3',5'-cyclic di-GMP biosynthesis. In terms of biological role, globin-coupled heme-based oxygen sensor protein displaying diguanylate cyclase (DGC) activity in response to oxygen availability. Thus, catalyzes the synthesis of cyclic diguanylate (c-di-GMP) via the condensation of 2 GTP molecules. Cyclic-di-GMP is a second messenger which controls cell surface-associated traits in bacteria. This is Diguanylate cyclase DosC (dosC) from Shigella boydii serotype 4 (strain Sb227).